A 936-amino-acid polypeptide reads, in one-letter code: Protein SIEL (936 aa).

In terms of assembly, interacts with SHR, MGP, SCR, JKD, CPC, TMO7 and AGL21, but not with LFY or STM.

Its subcellular location is the nucleus. It localises to the endosome. The protein resides in the cytoplasm. The protein localises to the cell cortex. Its function is as follows. Intracellular shuttle that promotes movement of SHR from the stele into the endodermis. Required for SHR association to endosomes and localization, and for intercellular movement of SHR. This chain is Protein SIEL, found in Arabidopsis thaliana (Mouse-ear cress).